We begin with the raw amino-acid sequence, 330 residues long: Ketol-acid reductoisomerase (NADP(+)) (330 aa).

The KARI N-terminal Rossmann domain occupies 3–184 (LSVYYDKDID…GGGRMGVLET (182 aa)). NADP(+) contacts are provided by residues 26-29 (YGTQ), Ser52, and Ser54. Residue His109 is part of the active site. Residue Gly135 participates in NADP(+) binding. Residues 185–329 (SFKEECESDL…EILRTPFNHE (145 aa)) form the KARI C-terminal knotted domain. 4 residues coordinate Mg(2+): Asp193, Glu197, Glu229, and Glu233. Ser254 lines the substrate pocket.

The protein belongs to the ketol-acid reductoisomerase family. Requires Mg(2+) as cofactor.

The catalysed reaction is (2R)-2,3-dihydroxy-3-methylbutanoate + NADP(+) = (2S)-2-acetolactate + NADPH + H(+). The enzyme catalyses (2R,3R)-2,3-dihydroxy-3-methylpentanoate + NADP(+) = (S)-2-ethyl-2-hydroxy-3-oxobutanoate + NADPH + H(+). The protein operates within amino-acid biosynthesis; L-isoleucine biosynthesis; L-isoleucine from 2-oxobutanoate: step 2/4. It functions in the pathway amino-acid biosynthesis; L-valine biosynthesis; L-valine from pyruvate: step 2/4. In terms of biological role, involved in the biosynthesis of branched-chain amino acids (BCAA). Catalyzes an alkyl-migration followed by a ketol-acid reduction of (S)-2-acetolactate (S2AL) to yield (R)-2,3-dihydroxy-isovalerate. In the isomerase reaction, S2AL is rearranged via a Mg-dependent methyl migration to produce 3-hydroxy-3-methyl-2-ketobutyrate (HMKB). In the reductase reaction, this 2-ketoacid undergoes a metal-dependent reduction by NADPH to yield (R)-2,3-dihydroxy-isovalerate. The chain is Ketol-acid reductoisomerase (NADP(+)) from Helicobacter acinonychis (strain Sheeba).